Here is a 1178-residue protein sequence, read N- to C-terminus: DNA-directed RNA polymerase subunit beta' (1178 aa).

The Zn(2+) site is built by Cys-60, Cys-62, Cys-75, and Cys-78. Residues Asp-450, Asp-452, and Asp-454 each coordinate Mg(2+). The Zn(2+) site is built by Cys-795, Cys-869, Cys-876, and Cys-879.

Belongs to the RNA polymerase beta' chain family. The RNAP catalytic core consists of 2 alpha, 1 beta, 1 beta' and 1 omega subunit. When a sigma factor is associated with the core the holoenzyme is formed, which can initiate transcription. Requires Mg(2+) as cofactor. Zn(2+) is required as a cofactor.

It catalyses the reaction RNA(n) + a ribonucleoside 5'-triphosphate = RNA(n+1) + diphosphate. Functionally, DNA-dependent RNA polymerase catalyzes the transcription of DNA into RNA using the four ribonucleoside triphosphates as substrates. The chain is DNA-directed RNA polymerase subunit beta' from Clostridium perfringens (strain ATCC 13124 / DSM 756 / JCM 1290 / NCIMB 6125 / NCTC 8237 / Type A).